Here is a 275-residue protein sequence, read N- to C-terminus: Beta-lactamase OXA-15 (275 aa).

A signal peptide spans 1–21 (MAIRIFAILFSIFSLATFAHA). Residue S72 is the Acyl-ester intermediate of the active site. K75 carries the post-translational modification N6-carboxylysine. 210 to 212 (KTG) serves as a coordination point for substrate.

This sequence belongs to the class-D beta-lactamase family.

It carries out the reaction a beta-lactam + H2O = a substituted beta-amino acid. Functionally, hydrolyzes oxacillin, first-generation cephalosporins and ceftazidime. Does not hydrolyze cefotaxime or carbapenems. The chain is Beta-lactamase OXA-15 (bla) from Pseudomonas aeruginosa.